A 308-amino-acid chain; its full sequence is MANLRDIRNRIDSIENTKQVTRAMKMVAAAKLRRAQEKIFRARPYAYKIGELTNHLKQELDPTAHPFFQAPEEASGALVIVITADRGLCGSFNSDAINTAEHLIETTYAETQSADDLFMLCVGKKGHKHFQKRDYRLVGDYKGVFDGLNFDVAQQVVEDAVEGFERGIWGEVKLVYNEFKNTIVQNQIVEPLLPIPEERFETPVMEEEADGFALPENGRAIDYIFEPGAPTLLDELVPRYLYYQVWRALLESNAAEQGARMVAMDNATSNAEELIEDLTLEYNRARQSAITRELLDITSGAEALEESG.

Belongs to the ATPase gamma chain family. F-type ATPases have 2 components, CF(1) - the catalytic core - and CF(0) - the membrane proton channel. CF(1) has five subunits: alpha(3), beta(3), gamma(1), delta(1), epsilon(1). CF(0) has three main subunits: a, b and c.

It is found in the cell inner membrane. Functionally, produces ATP from ADP in the presence of a proton gradient across the membrane. The gamma chain is believed to be important in regulating ATPase activity and the flow of protons through the CF(0) complex. This chain is ATP synthase gamma chain, found in Salinibacter ruber (strain DSM 13855 / M31).